The chain runs to 220 residues: Metalloproteinase inhibitor 2 (220 aa).

A signal peptide spans 1–26 (MGATARSLRLALGLLLLGTLPRGADA). Position 27 (C27) interacts with Zn(2+). Involved in metalloproteinase-binding regions lie at residues 27–30 (CSCS) and 95–96 (SA). Disulfide bonds link C27–C98, C29–C127, C39–C152, C154–C201, C159–C164, and C172–C193. One can recognise an NTR domain in the interval 27-152 (CSCSPVHPQQ…SLNHRYQMGC (126 aa)).

It belongs to the protease inhibitor I35 (TIMP) family. In terms of assembly, interacts (via the C-terminal) with MMP2 (via the C-terminal PEX domain); the interaction inhibits the MMP2 activity. The activity of TIMP2 is dependent on the presence of disulfide bonds. Predominantly expressed in the lung in alveolar macrophages and epithelial cells. Also found in brain, kidney, intestine, spleen and heart.

Its subcellular location is the secreted. Complexes with metalloproteinases (such as collagenases) and irreversibly inactivates them by binding to their catalytic zinc cofactor. The chain is Metalloproteinase inhibitor 2 (TIMP2) from Cavia porcellus (Guinea pig).